The primary structure comprises 448 residues: UDP-N-acetylmuramoylalanine--D-glutamate ligase (448 aa).

Residue 116–122 (GSNAKST) participates in ATP binding.

The protein belongs to the MurCDEF family.

The protein localises to the cytoplasm. It carries out the reaction UDP-N-acetyl-alpha-D-muramoyl-L-alanine + D-glutamate + ATP = UDP-N-acetyl-alpha-D-muramoyl-L-alanyl-D-glutamate + ADP + phosphate + H(+). It functions in the pathway cell wall biogenesis; peptidoglycan biosynthesis. Functionally, cell wall formation. Catalyzes the addition of glutamate to the nucleotide precursor UDP-N-acetylmuramoyl-L-alanine (UMA). This is UDP-N-acetylmuramoylalanine--D-glutamate ligase from Pseudomonas fluorescens (strain Pf0-1).